Consider the following 148-residue polypeptide: Large ribosomal subunit protein bL9 (148 aa).

This sequence belongs to the bacterial ribosomal protein bL9 family.

Functionally, binds to the 23S rRNA. This Bacillus cereus (strain ATCC 10987 / NRS 248) protein is Large ribosomal subunit protein bL9.